A 133-amino-acid polypeptide reads, in one-letter code: Ribosome-binding factor A (133 aa).

Belongs to the RbfA family. As to quaternary structure, monomer. Binds 30S ribosomal subunits, but not 50S ribosomal subunits or 70S ribosomes.

The protein localises to the cytoplasm. Its function is as follows. One of several proteins that assist in the late maturation steps of the functional core of the 30S ribosomal subunit. Associates with free 30S ribosomal subunits (but not with 30S subunits that are part of 70S ribosomes or polysomes). Required for efficient processing of 16S rRNA. May interact with the 5'-terminal helix region of 16S rRNA. This is Ribosome-binding factor A from Pseudomonas fluorescens (strain Pf0-1).